Here is a 493-residue protein sequence, read N- to C-terminus: Glycylpeptide N-tetradecanoyltransferase (493 aa).

Residues 1-30 (MSDSKDSKGKAPQKPNDAEQTPGGKLTPQA) are disordered. Residues 82 to 85 (FKFW), 216 to 218 (LCI), and 224 to 228 (SKRLA) each bind tetradecanoyl-CoA. Leucine 493 acts as the Proton acceptor; via carboxylate in catalysis.

The protein belongs to the NMT family. Monomer.

It is found in the cytoplasm. The catalysed reaction is N-terminal glycyl-[protein] + tetradecanoyl-CoA = N-tetradecanoylglycyl-[protein] + CoA + H(+). In terms of biological role, adds a myristoyl group to the N-terminal glycine residue of certain cellular proteins. This chain is Glycylpeptide N-tetradecanoyltransferase (swoF), found in Emericella nidulans (strain FGSC A4 / ATCC 38163 / CBS 112.46 / NRRL 194 / M139) (Aspergillus nidulans).